A 304-amino-acid polypeptide reads, in one-letter code: bZIP transcription factor 50 (304 aa).

At M1–T222 the chain is on the cytoplasmic side. Disordered regions lie at residues G26–A60 and G94–K163. The span at S45–E59 shows a compositional bias: low complexity. Positions E127–D139 are enriched in acidic residues. Positions M141–K203 constitute a bZIP domain. Positions K143–K167 are basic motif. Residues R150 to K163 are compositionally biased toward basic and acidic residues. Positions L169–L183 are leucine-zipper. A helical membrane pass occupies residues L223–L243. Topologically, residues P244 to C304 are lumenal.

Belongs to the bZIP family.

Its subcellular location is the endoplasmic reticulum membrane. It is found in the nucleus. Transcriptionally activated by IRE1 in response to endoplasmic reticulum (ER) stress. IRE1 cleaves a 20-bp fragment causing a frameshift of the mRNA transcript, leading to a nuclear isoform of the BZIP50 activator. Functionally, transcription factor involved in endoplasmic reticulum (ER) stress response. Acts downstream of the ER stress sensors IRE1, BZIP39 and BZIP60 to activate BiP chaperone genes. In Oryza sativa subsp. japonica (Rice), this protein is bZIP transcription factor 50.